We begin with the raw amino-acid sequence, 277 residues long: Multiple sugar-binding transport system permease protein MsmG (277 aa).

6 helical membrane passes run 13-33 (YVLL…TVFS), 74-94 (VITV…AYSI), 110-130 (LLIL…TVMM), 141-161 (LIIL…VGYI), 198-218 (TTLI…LLIL), and 243-263 (GPSF…YLIF). The 195-residue stretch at 69 to 263 (FWNSTVITVL…ITITIVYLIF (195 aa)) folds into the ABC transmembrane type-1 domain.

The protein belongs to the binding-protein-dependent transport system permease family. MalFG subfamily.

It is found in the cell membrane. Functionally, involved in a binding protein-dependent transport system responsible for the uptake of melibiose, raffinose and isomaltotriose. This chain is Multiple sugar-binding transport system permease protein MsmG (msmG), found in Streptococcus mutans serotype c (strain ATCC 700610 / UA159).